A 268-amino-acid chain; its full sequence is Chymotrypsin-C (268 aa).

The signal sequence occupies residues 1–16; the sequence is MLGITVLAAILACASC. Residues 17–29 constitute a propeptide, activation peptide; the sequence is CGNPAFPPNLSTR. 5 disulfides stabilise this stretch: Cys17-Cys141, Cys59-Cys75, Cys155-Cys222, Cys186-Cys202, and Cys212-Cys243. A glycan (N-linked (GlcNAc...) asparagine) is linked at Asn25. Positions 30–267 constitute a Peptidase S1 domain; it reads VVGGEDAVPN…YNDWINEKIQ (238 aa). Residue His74 is the Charge relay system of the active site. The N-linked (GlcNAc...) asparagine glycan is linked to Asn90. The active-site Charge relay system is the Asp121. Residue Ser216 is the Charge relay system of the active site.

The protein belongs to the peptidase S1 family. Elastase subfamily. As to expression, pancreas.

It carries out the reaction Preferential cleavage: Leu-|-Xaa, Tyr-|-Xaa, Phe-|-Xaa, Met-|-Xaa, Trp-|-Xaa, Gln-|-Xaa, Asn-|-Xaa.. Functionally, regulates activation and degradation of trypsinogens and procarboxypeptidases by targeting specific cleavage sites within their zymogen precursors. Has chymotrypsin-type protease activity and hypocalcemic activity. Cleaves TRY4 and TRY5 and thereby inhibits their autoactivation. This Rattus norvegicus (Rat) protein is Chymotrypsin-C (Ctrc).